We begin with the raw amino-acid sequence, 133 residues long: Nickel-responsive regulator (133 aa).

4 residues coordinate Ni(2+): histidine 76, histidine 87, histidine 89, and cysteine 95.

Belongs to the transcriptional regulatory CopG/NikR family. Homotetramer. The cofactor is Ni(2+).

Transcriptional repressor of the nikABCDE operon. Is active in the presence of excessive concentrations of intracellular nickel. In Escherichia fergusonii (strain ATCC 35469 / DSM 13698 / CCUG 18766 / IAM 14443 / JCM 21226 / LMG 7866 / NBRC 102419 / NCTC 12128 / CDC 0568-73), this protein is Nickel-responsive regulator.